Here is a 686-residue protein sequence, read N- to C-terminus: Probable serine/threonine-protein kinase pdkA (686 aa).

The interval 1-31 (MENIVITNTSGGGGGGVPSSSTDPPNNTTTT) is disordered. Over residues 18 to 31 (PSSSTDPPNNTTTT) the composition is skewed to low complexity. The region spanning 69–449 (FIIGKVLGEG…FDNLKAHPFF (381 aa)) is the Protein kinase domain. Residues 79–81 (SYG) and K98 each bind ATP. The PIF-pocket stretch occupies residues 100–144 (LEKKQIIKENKIKYVQIEKEIFCKSNHPNIVKLFFTFRSEQCLYY). ATP is bound by residues 147-149 (ELC) and D153. The active-site Proton acceptor is D192. Positions 196 and 210 each coordinate ATP. Disordered stretches follow at residues 211-321 (FGTG…NTNT) and 481-584 (LFSP…NNIS). A compositionally biased stretch (low complexity) spans 222-257 (SSQQQQQQQQQQQQLPTNSSGNLSSLLNNVNNLSVS). The segment covering 258–267 (TDLTQQQQNR) has biased composition (polar residues). 3 stretches are compositionally biased toward low complexity: residues 268–279 (TSSVDSASTTDS), 288–321 (TTTTTNNNNNNNNNNNNNNNNTAAGSNTNTNTNT), and 503–568 (NSCN…QRSG). The region spanning 593–682 (VIYQGLVWKR…DSIKSVILSS (90 aa)) is the PH domain.

Belongs to the protein kinase superfamily. AGC Ser/Thr protein kinase family. PDPK1 subfamily.

The enzyme catalyses L-seryl-[protein] + ATP = O-phospho-L-seryl-[protein] + ADP + H(+). The catalysed reaction is L-threonyl-[protein] + ATP = O-phospho-L-threonyl-[protein] + ADP + H(+). This is Probable serine/threonine-protein kinase pdkA (pdkA) from Dictyostelium discoideum (Social amoeba).